The chain runs to 117 residues: Large ribosomal subunit protein bL19 (117 aa).

This sequence belongs to the bacterial ribosomal protein bL19 family.

Its function is as follows. This protein is located at the 30S-50S ribosomal subunit interface and may play a role in the structure and function of the aminoacyl-tRNA binding site. This Halorhodospira halophila (strain DSM 244 / SL1) (Ectothiorhodospira halophila (strain DSM 244 / SL1)) protein is Large ribosomal subunit protein bL19.